The primary structure comprises 222 residues: PKHD-type hydroxylase cce_3668 (222 aa).

Residues 78–175 (HIHSLRFSRY…RLVVVGWVHS (98 aa)) form the Fe2OG dioxygenase domain. The Fe cation site is built by histidine 96, aspartate 98, and histidine 156. Arginine 166 contributes to the 2-oxoglutarate binding site.

It depends on Fe(2+) as a cofactor. L-ascorbate is required as a cofactor.

This chain is PKHD-type hydroxylase cce_3668, found in Crocosphaera subtropica (strain ATCC 51142 / BH68) (Cyanothece sp. (strain ATCC 51142)).